We begin with the raw amino-acid sequence, 368 residues long: MTTEMQEIAITEEKPLLPGQSDAVKDAEIAARILLDQGQEHTVETPHGVLHVTVHGSGNARRPAILTIHDVGMDSKSCFSTLFRFEEMQEIVKNFTVVHIDAPGQEEGAAVYPAGYQYASMDQVSEMLPAVLQFFNFRTIIGVGVGAGAYILSRFTLNNPEAVEGLVLVNVDPNARGWMDWAAHKLSNLTSSLSDQIISHLFSQQELSANTELIQTHRERITKAPNLLNIELFWKSYLGRRDLSLDRNNTFKCPVMLVVGDQAPYEEAAVECNSKLDPTTTSFLKMADAGGMPQLTQPSKLTEAFKYFIQGMGYMASSCMTRLSRSRTTSLSSSYSMEGSRSRSRTLSQGSQGGQLPPSPSNTMEVSC.

The span at 330-339 (SLSSSYSMEG) shows a compositional bias: low complexity. Positions 330–368 (SLSSSYSMEGSRSRSRTLSQGSQGGQLPPSPSNTMEVSC) are disordered.

The protein belongs to the NDRG family.

It is found in the cytoplasm. Contributes to the regulation of the Wnt signaling pathway. Down-regulates CTNNB1-mediated transcriptional activation of target genes. May be involved in neuron differentiation. The protein is Protein NDRG2 (ndrg2) of Danio rerio (Zebrafish).